The primary structure comprises 447 residues: Na(+)-translocating NADH-quinone reductase subunit A (447 aa).

The protein belongs to the NqrA family. Composed of six subunits; NqrA, NqrB, NqrC, NqrD, NqrE and NqrF.

It catalyses the reaction a ubiquinone + n Na(+)(in) + NADH + H(+) = a ubiquinol + n Na(+)(out) + NAD(+). Its function is as follows. NQR complex catalyzes the reduction of ubiquinone-1 to ubiquinol by two successive reactions, coupled with the transport of Na(+) ions from the cytoplasm to the periplasm. NqrA to NqrE are probably involved in the second step, the conversion of ubisemiquinone to ubiquinol. In Yersinia pestis bv. Antiqua (strain Angola), this protein is Na(+)-translocating NADH-quinone reductase subunit A.